Reading from the N-terminus, the 353-residue chain is Chemerin-like receptor 2 (353 aa).

Topologically, residues 1–41 (MEVSREMLFEELDNYSYALEYYSQEPDAEENVYPGIVHWIS) are extracellular. A glycan (N-linked (GlcNAc...) asparagine) is linked at asparagine 14. Residues 42–62 (LLLYALAFVLGIPGNAIVIWF) traverse the membrane as a helical segment. Residues 63-73 (MGFKWKKTVTT) are Cytoplasmic-facing. Residues 74 to 94 (LWFLNLAIADFVFVLFLPLYI) form a helical membrane-spanning segment. Residues 95-112 (SYVALSFHWPFGRWLCKL) are Extracellular-facing. Cysteine 110 and cysteine 187 form a disulfide bridge. The helical transmembrane segment at 113–133 (NSFIAQLNMFSSVFFLTVISL) threads the bilayer. At 134–154 (DRYIHLIHPGLSHPHRTLKNS) the chain is on the cytoplasmic side. A helical transmembrane segment spans residues 155 to 175 (LLVVLFVWLLASLLGGPTLYF). At 176-210 (RDTVEVNNRIICYNNFQEYELTLMRHHVLTWVKFL) the chain is on the extracellular side. Residues 211-231 (FGYLLPLLTMSSCYLCLIFKT) form a helical membrane-spanning segment. The Cytoplasmic portion of the chain corresponds to 232-247 (KKQNILISSKHLWMIL). The chain crosses the membrane as a helical span at residues 248 to 268 (SVVIAFMVCWTPFHLFSIWEL). Topologically, residues 269 to 286 (SIHHNSSFQNVLQGGIPL) are extracellular. A helical transmembrane segment spans residues 287–307 (STGLAFLNSCLNPILYVLISK). The Cytoplasmic portion of the chain corresponds to 308-353 (KFQARFRASVAEVLKRSLWEASCSGTVSEQLRSAETKSLSLLETAQ).

Belongs to the chemokine-like receptor (CMKLR) family.

It is found in the cell membrane. In terms of biological role, receptor for chemoattractant adipokine chemerin/RARRES2 suggesting a role for this receptor in the regulation of inflammation and energy homesotasis. Signals mainly via beta-arrestin pathway. Binding of RARRES2 activates weakly G proteins, calcium mobilization and MAPK1/MAPK3 (ERK1/2) phosphorylation too. Acts also as a receptor for TAFA1, mediates its effects on neuronal stem-cell proliferation and differentiation via the activation of ROCK/ERK and ROCK/STAT3 signaling pathway. This is Chemerin-like receptor 2 (Cmklr2) from Rattus norvegicus (Rat).